Reading from the N-terminus, the 219-residue chain is uncharacterized protein (219 aa).

Positions 42–71 (RQPRVVPVTSSDPEVVDDEDDEDQSDDSDE) are disordered. Residues 45-54 (RVVPVTSSDP) are compositionally biased toward low complexity. Positions 55–71 (EVVDDEDDEDQSDDSDE) are enriched in acidic residues.

This is an uncharacterized protein from Dryophytes versicolor (chameleon treefrog).